Here is a 692-residue protein sequence, read N- to C-terminus: Alpha-amylase SusG (692 aa).

An N-terminal signal peptide occupies residues 1–22 (MNKHLHFLSLLWLSMLMAFMTA). Cys23 carries N-palmitoyl cysteine lipidation. A lipid anchor (S-diacylglycerol cysteine) is attached at Cys23. Asp73, Asp75, Asp77, Tyr79, and Asp81 together coordinate Mg(2+). Asn153 contributes to the Ca(2+) binding site. Starch binding regions lie at residues His154, 260-263 (YYGE), and 330-333 (NIMF). Asp352 is a Ca(2+) binding site. The starch binding stretch occupies residues 386–392 (RLDAVKH). The active-site Nucleophile is the Asp388. Ca(2+) is bound at residue His392. The active-site Proton donor is Glu431. Regions of interest (starch binding) are located at Asp437 and Arg457.

Belongs to the glycosyl hydrolase 13 family. In terms of assembly, monomer. Ca(2+) is required as a cofactor.

It is found in the cell outer membrane. The enzyme catalyses Endohydrolysis of (1-&gt;4)-alpha-D-glucosidic linkages in polysaccharides containing three or more (1-&gt;4)-alpha-linked D-glucose units.. Its pathway is glycan degradation; starch degradation. Functionally, alpha-amylase that cleaves starch into oligosaccharides before internalization for degradation, the first step in starch degradation. This Bacteroides thetaiotaomicron (strain ATCC 29148 / DSM 2079 / JCM 5827 / CCUG 10774 / NCTC 10582 / VPI-5482 / E50) protein is Alpha-amylase SusG (susG).